The primary structure comprises 115 residues: Replication initiation control protein YabA (115 aa).

Zn(2+) is bound by residues His90, Cys92, Cys106, and Cys109.

This sequence belongs to the YabA family. In terms of assembly, homotetramer. Interacts with both DnaA and DnaN, acting as a bridge between these two proteins. It depends on Zn(2+) as a cofactor.

It is found in the cytoplasm. Its subcellular location is the nucleoid. In terms of biological role, involved in control of chromosome replication initiation. Inhibits the cooperative binding of DnaA to the oriC region, thus negatively regulating initiation of chromosome replication. Inhibits the ability of DnaA-ATP to form a helix on DNA; does not disassemble preformed DnaA-DNA helices. Decreases the residence time of DnaA on the chromosome at its binding sites (oriC, replication forks and promoter-binding sites). Tethers DnaA to the replication machinery via the DNA polymerase beta sliding clamp subunit (dnaN). Associates with oriC and other DnaA targets on the chromosome in a DnaA-dependent manner. The protein is Replication initiation control protein YabA of Staphylococcus aureus (strain bovine RF122 / ET3-1).